Reading from the N-terminus, the 321-residue chain is Cytochrome f (321 aa).

An N-terminal signal peptide occupies residues 1–38 (MINLFLLKYKTAFSTFLKPFAYLSLILSVCFYSIQAQA). Heme contacts are provided by Phe39, Cys59, Cys62, and His63. The chain crosses the membrane as a helical span at residues 287 to 306 (VKGLIAFFFTVILAQILLVL).

Belongs to the cytochrome f family. In terms of assembly, the 4 large subunits of the cytochrome b6-f complex are cytochrome b6, subunit IV (17 kDa polypeptide, petD), cytochrome f and the Rieske protein, while the 4 small subunits are PetG, PetL, PetM and PetN. The complex functions as a dimer. Requires heme as cofactor.

The protein resides in the plastid. It is found in the chloroplast thylakoid membrane. Functionally, component of the cytochrome b6-f complex, which mediates electron transfer between photosystem II (PSII) and photosystem I (PSI), cyclic electron flow around PSI, and state transitions. The sequence is that of Cytochrome f (petA) from Guillardia theta (Cryptophyte).